Consider the following 104-residue polypeptide: Large ribosomal subunit protein uL24 (104 aa).

This sequence belongs to the universal ribosomal protein uL24 family. Part of the 50S ribosomal subunit.

Its function is as follows. One of two assembly initiator proteins, it binds directly to the 5'-end of the 23S rRNA, where it nucleates assembly of the 50S subunit. In terms of biological role, one of the proteins that surrounds the polypeptide exit tunnel on the outside of the subunit. The polypeptide is Large ribosomal subunit protein uL24 (Pseudomonas aeruginosa (strain LESB58)).